Here is a 1796-residue protein sequence, read N- to C-terminus: Non-reducing polyketide synthase nscA (1796 aa).

The segment at 18–256 (DDLKDLFRRL…PLPVYDGLCH (239 aa)) is N-terminal acylcarrier protein transacylase domain (SAT). In terms of domain architecture, Ketosynthase family 3 (KS3) spans 392-825 (SSKLAIVGMA…GGNTTLLLED (434 aa)). Residues Cys-565, His-700, and His-743 each act as for beta-ketoacyl synthase activity in the active site. The interval 931–1251 (FTGQGAYYSG…SLVTLHLAGL (321 aa)) is malonyl-CoA:ACP transacylase (MAT) domain. The product template (PT) domain stretch occupies residues 1317–1636 (TSLVHQITAE…RLLMDRFFSP (320 aa)). Positions 1321 to 1457 (HQITAETVEA…ATVRFEDPVA (137 aa)) are N-terminal hotdog fold. The PKS/mFAS DH domain maps to 1321 to 1631 (HQITAETVEA…FRRVPRLLMD (311 aa)). The Proton acceptor; for dehydratase activity role is filled by His-1353. Residues 1485–1631 (ASRLSKPLAY…FRRVPRLLMD (147 aa)) are C-terminal hotdog fold. The Proton donor; for dehydratase activity role is filled by Asp-1542. Residues 1688-1720 (TPESTPPLAPSSESSTPKESPIATPPESERADP) form a disordered region. A compositionally biased stretch (low complexity) spans 1697-1708 (PSSESSTPKESP). The region spanning 1719–1796 (DPMDNMVSQC…EMTAWIEEYC (78 aa)) is the Carrier domain. Ser-1756 carries the post-translational modification O-(pantetheine 4'-phosphoryl)serine.

The cofactor is pantetheine 4'-phosphate.

The protein operates within secondary metabolite biosynthesis. Its function is as follows. Non-reducing polyketide synthase; part of the gene cluster that mediates the biosynthesis of neosartoricin B, a prenylated anthracenone that probably exhibits T-cell antiproliferative activity, suggestive of a physiological role as an immunosuppressive agent. The non-reducing polyketide synthase nscA probably synthesizes and cyclizes the decaketide backbone. The hydrolase nscB then mediates the product release through hydrolysis followed by spontaneous decarboxylation. The prenyltransferase nscD catalyzes the addition of the dimethylallyl group to the aromatic C5. The FAD-dependent monooxygenase nscC is then responsible for the stereospecific hydroxylation at C2. Neosartoricin B can be converted into two additional compounds neosartoricins C and D. Neosartoricin C is a spirocyclic compound that is cyclized through the attack of C3 hydroxyl on C14, followed by dehydration. On the other hand, neosartoricin D is a further cyclized compound in which attack of C2 on C14 in neosartoricin C results in the formation of the acetal-containing dioxabicyclo-octanone ring. Both of these compounds are novel and possibly represent related metabolites of the gene cluster. The protein is Non-reducing polyketide synthase nscA of Arthroderma otae (strain ATCC MYA-4605 / CBS 113480) (Microsporum canis).